We begin with the raw amino-acid sequence, 118 residues long: Cell division protein FtsB (118 aa).

Topologically, residues Met-1–Trp-6 are cytoplasmic. The chain crosses the membrane as a helical span at residues Leu-7–Phe-24. At Gly-25–Arg-118 the chain is on the periplasmic side. Positions Gly-30–Gly-66 form a coiled coil. The interval Leu-98–Arg-118 is disordered. Residues Ser-103 to Arg-118 are compositionally biased toward basic and acidic residues.

It belongs to the FtsB family. As to quaternary structure, part of a complex composed of FtsB, FtsL and FtsQ.

The protein localises to the cell inner membrane. In terms of biological role, essential cell division protein. May link together the upstream cell division proteins, which are predominantly cytoplasmic, with the downstream cell division proteins, which are predominantly periplasmic. The polypeptide is Cell division protein FtsB (Xylella fastidiosa (strain M12)).